The chain runs to 158 residues: NAD(P)H-quinone oxidoreductase subunit J, chloroplastic (158 aa).

This sequence belongs to the complex I 30 kDa subunit family. In terms of assembly, NDH is composed of at least 16 different subunits, 5 of which are encoded in the nucleus.

It is found in the plastid. Its subcellular location is the chloroplast thylakoid membrane. It catalyses the reaction a plastoquinone + NADH + (n+1) H(+)(in) = a plastoquinol + NAD(+) + n H(+)(out). It carries out the reaction a plastoquinone + NADPH + (n+1) H(+)(in) = a plastoquinol + NADP(+) + n H(+)(out). NDH shuttles electrons from NAD(P)H:plastoquinone, via FMN and iron-sulfur (Fe-S) centers, to quinones in the photosynthetic chain and possibly in a chloroplast respiratory chain. The immediate electron acceptor for the enzyme in this species is believed to be plastoquinone. Couples the redox reaction to proton translocation, and thus conserves the redox energy in a proton gradient. This Solanum tuberosum (Potato) protein is NAD(P)H-quinone oxidoreductase subunit J, chloroplastic.